We begin with the raw amino-acid sequence, 164 residues long: 2-C-methyl-D-erythritol 2,4-cyclodiphosphate synthase (164 aa).

Positions 8 and 10 each coordinate a divalent metal cation. Residues Asp-8–His-10 and His-34–Ser-35 each bind 4-CDP-2-C-methyl-D-erythritol 2-phosphate. His-42 is an a divalent metal cation binding site. 4-CDP-2-C-methyl-D-erythritol 2-phosphate-binding positions include Asp-56 to Gly-58, Thr-132 to Glu-135, Phe-139, and Lys-142.

It belongs to the IspF family. As to quaternary structure, homotrimer. The cofactor is a divalent metal cation.

The enzyme catalyses 4-CDP-2-C-methyl-D-erythritol 2-phosphate = 2-C-methyl-D-erythritol 2,4-cyclic diphosphate + CMP. The protein operates within isoprenoid biosynthesis; isopentenyl diphosphate biosynthesis via DXP pathway; isopentenyl diphosphate from 1-deoxy-D-xylulose 5-phosphate: step 4/6. Its function is as follows. Involved in the biosynthesis of isopentenyl diphosphate (IPP) and dimethylallyl diphosphate (DMAPP), two major building blocks of isoprenoid compounds. Catalyzes the conversion of 4-diphosphocytidyl-2-C-methyl-D-erythritol 2-phosphate (CDP-ME2P) to 2-C-methyl-D-erythritol 2,4-cyclodiphosphate (ME-CPP) with a corresponding release of cytidine 5-monophosphate (CMP). The sequence is that of 2-C-methyl-D-erythritol 2,4-cyclodiphosphate synthase from Clostridium kluyveri (strain NBRC 12016).